The sequence spans 478 residues: Multidrug resistance outer membrane protein MdtQ (478 aa).

The N-terminal stretch at 1–21 (MNRDSFYPAIACFPLLLMLAG) is a signal peptide. The N-palmitoyl cysteine moiety is linked to residue Cys-22. Cys-22 is lipidated: S-diacylglycerol cysteine.

The protein belongs to the outer membrane factor (OMF) (TC 1.B.17) family.

It is found in the cell outer membrane. Functionally, could be involved in resistance to puromycin, acriflavine and tetraphenylarsonium chloride. In Escherichia coli O6:H1 (strain CFT073 / ATCC 700928 / UPEC), this protein is Multidrug resistance outer membrane protein MdtQ (mdtQ).